The following is a 320-amino-acid chain: MSVIDIFKKRLQAVSKKPVIIFPEGWSASVLKAVEMLNESKLIQPAVIFHNRQEIPANFDKKITHYVIDEMDLTSYANFVYEKRKHKGMDLKEAQKFVRDPSSLAATLVALKVVDGEVCGKEYATKDTLRPALQLLATGNFVSSVFIMEKGEERLYFTDCAFAVYPNSQELATIAENTFNFAKSLNEDEIKMAFLSYSTLGSGKGEMVDKVVLATKLFLEKHPELHQSVCGELQFDAAFVEKVRLQKAPQLTWKNSANIYVFPNLDAGNIAYKIAQRLGGYDAIGPIVLGLSSPVNDLSRGASVSDIFNVGIITAAQAIK.

The protein belongs to the phosphate acetyltransferase and butyryltransferase family.

The protein resides in the cytoplasm. The catalysed reaction is acetyl-CoA + phosphate = acetyl phosphate + CoA. Its pathway is metabolic intermediate biosynthesis; acetyl-CoA biosynthesis; acetyl-CoA from acetate: step 2/2. In Mycoplasma genitalium (strain ATCC 33530 / DSM 19775 / NCTC 10195 / G37) (Mycoplasmoides genitalium), this protein is Phosphate acetyltransferase (pta).